The following is a 1065-amino-acid chain: MVAYLNIHTAYDLLNSSLKIEDAVRLAVSENVDALAITDTNVLYGFPKFYDACIANNIKPIFGMTIYVTNGLNTVETVVLAKNNDGLKDLYQLSSEIKMNSMENVSFELLQQFSSNLIIIFKNVADEHRDIVQVFDSHEDTYLDHQSVLVQGIKHVWIQNVCYQTRQDADTISALAAIRDNAKLDLIHDQEDFGAHFLTEKEIKQLDINQEYLTQVDVIAQKCNAELKYHQSLLPQYQTPNDESAKKYLWRVLVTQLKKLELNYDVYLERLKYEYKVITNMGFEDYFLIVSDLIHYAKTNDVMVGPGRGSSAGSLVSYLLGITTIDPIKFNLLFERFLNPERVTMPDIDIDFEDTRRERVIQYVQEKYGELHVSGIVTFGHLLARAVARDVGRIMGFDEVTLNEISSLIPHKLGITLDEAYQIDDFKKFVHRNHRHERWFSICKKLEGLPRHTSTHAAGIIINDHPLYEYAPLTKGDTGLLTQWTMTEAERIGLLKIDFLGLRNLSIIHQILIQVKKDLGINIDIEKIPFDDQKVFELLSQGDTTGIFQLESDGVRSVLKKLKPEHFEDIVAVTSLYRPGPMEEIPTYITRRHDPSKVQYLHPHLEPILKNTYGVIIYQEQIMQIASTFANFSYGEADILRRAMSKKNRAVLESERQHFIEGAKQNGYHEDISKQIFDLILKFADYGFPRAHAVSYSKIAYIMSFLKVHYPNYFYANILSNVIGSEKKTAQMIEEAKKQGITILPPNINESHWFYKPSQEGIYLSIGTIKGVGYQSVKVIVDERYQNGKFKDFFDFARRIPKRVKTRKLLEALILVGAFDAFGKTRSTLLQAIDQVLDGDLNIEQDGFLFDILTPKQMYEDKEELPDALISQYEKEYLGFYVSQHPVDKKFVAKQYLTIFKLSNAQNYKPILVQFDKVKQIRTKNGQNMAFVTLNDGIETLDGVIFPNQFKKYEELLSHNDLFIVSGKFDHRKQQRQLIINEIQTLATFEEQKLAFAKQIIIRNKSQIDMFEEMIKATKENANDVVLSFYDETIKQMTTLGYINQKDSMFNNFIQSFNPSDIRLI.

It belongs to the DNA polymerase type-C family. DnaE subfamily. As to quaternary structure, DNA polymerase III contains a core (composed of alpha, epsilon and theta chains) that associates with a tau subunit. This core dimerizes to form the PolIII' complex. PolIII' associates with the gamma complex (composed of gamma, delta, delta', psi and chi chains) and with the beta chain to form the complete DNA polymerase III complex.

The protein resides in the cytoplasm. The enzyme catalyses DNA(n) + a 2'-deoxyribonucleoside 5'-triphosphate = DNA(n+1) + diphosphate. In terms of biological role, DNA polymerase III is a complex, multichain enzyme responsible for most of the replicative synthesis in bacteria. This DNA polymerase also exhibits 3' to 5' exonuclease activity. The alpha chain is the DNA polymerase. The chain is DNA polymerase III subunit alpha (dnaE) from Staphylococcus aureus (strain Mu50 / ATCC 700699).